The following is a 429-amino-acid chain: Septin-8 (429 aa).

Over residues 1 to 16 (MAATDLERVSNAEPEP) the composition is skewed to basic and acidic residues. The disordered stretch occupies residues 1 to 23 (MAATDLERVSNAEPEPRSLSLGG). Position 2 is an N-acetylalanine (Ala-2). Ser-10 is subject to Phosphoserine. The 267-residue stretch at 41–307 (QGFSFNILCV…ELYRRCKLEE (267 aa)) folds into the Septin-type G domain. A G1 motif region spans residues 51 to 58 (GETGIGKS). GTP contacts are provided by residues 51-58 (GETGIGKS), Gly-106, 187-195 (KADTISKSE), Gly-241, and Arg-256. Positions 103 to 106 (DAVG) are G3 motif. The tract at residues 186–189 (AKAD) is G4 motif. Residues 320-412 (FSLQETYEAK…AAMEALQSQA (93 aa)) are a coiled coil. Residues 409–420 (QSQALHATSQQP) show a composition bias toward polar residues. The tract at residues 409–429 (QSQALHATSQQPLRKDKDKKN) is disordered.

Belongs to the TRAFAC class TrmE-Era-EngA-EngB-Septin-like GTPase superfamily. Septin GTPase family. In terms of assembly, septins polymerize into heterooligomeric protein complexes that form filaments, and can associate with cellular membranes, actin filaments and microtubules. GTPase activity is required for filament formation. Interacts with SEPTIN5. Interacts with CDK14, SEPTIN4 and SEPTIN7. Interacts with VAMP2; the interaction inhibits interaction of VAMP2 with SYP. Interacts with STX1A.

It localises to the cytoplasm. Its subcellular location is the cytoskeleton. The protein resides in the synapse. It is found in the cell projection. The protein localises to the axon. It localises to the cytoplasmic vesicle. Its subcellular location is the secretory vesicle. The protein resides in the synaptic vesicle membrane. It is found in the presynapse. Functionally, filament-forming cytoskeletal GTPase. May play a role in platelet secretion. Seems to participate in the process of SNARE complex formation in synaptic vesicles. This Mus musculus (Mouse) protein is Septin-8.